A 184-amino-acid chain; its full sequence is Ribulose bisphosphate carboxylase small subunit, chloroplastic 2 (184 aa).

Residues 1-59 (MASSMMSNAATAVAVAATSGGAQANMVAPFNGLKSIASFPVTRKSNDITSIASNGGRVQ) constitute a chloroplast transit peptide.

Belongs to the RuBisCO small chain family. As to quaternary structure, heterohexadecamer of 8 large and 8 small subunits.

The protein localises to the plastid. It is found in the chloroplast. In terms of biological role, ruBisCO catalyzes two reactions: the carboxylation of D-ribulose 1,5-bisphosphate, the primary event in carbon dioxide fixation, as well as the oxidative fragmentation of the pentose substrate. Both reactions occur simultaneously and in competition at the same active site. Although the small subunit is not catalytic it is essential for maximal activity. The sequence is that of Ribulose bisphosphate carboxylase small subunit, chloroplastic 2 from Amaranthus hypochondriacus (Prince-of-Wales feather).